Consider the following 89-residue polypeptide: UPF0237 protein CE1668 (89 aa).

The ACT domain occupies 4-78 (IMTVTGQDHT…KEQGLVIRIQ (75 aa)).

Belongs to the UPF0237 family.

This chain is UPF0237 protein CE1668, found in Corynebacterium efficiens (strain DSM 44549 / YS-314 / AJ 12310 / JCM 11189 / NBRC 100395).